The sequence spans 359 residues: 3-dehydroquinate synthase (359 aa).

Residues 71 to 76, 105 to 109, 129 to 130, Lys-142, Lys-151, and 169 to 172 contribute to the NAD(+) site; these read DGEAYK, GVIGD, TT, and TLGT. Positions 184, 247, and 264 each coordinate Zn(2+).

The protein belongs to the sugar phosphate cyclases superfamily. Dehydroquinate synthase family. The cofactor is Co(2+). Zn(2+) serves as cofactor. NAD(+) is required as a cofactor.

The protein resides in the cytoplasm. The enzyme catalyses 7-phospho-2-dehydro-3-deoxy-D-arabino-heptonate = 3-dehydroquinate + phosphate. The protein operates within metabolic intermediate biosynthesis; chorismate biosynthesis; chorismate from D-erythrose 4-phosphate and phosphoenolpyruvate: step 2/7. Functionally, catalyzes the conversion of 3-deoxy-D-arabino-heptulosonate 7-phosphate (DAHP) to dehydroquinate (DHQ). The chain is 3-dehydroquinate synthase from Thiobacillus denitrificans (strain ATCC 25259 / T1).